The sequence spans 81 residues: Salivary thrombin inhibitor anophelin (81 aa).

Residues 1–22 (MANKLFLISLLCVVLVAKIAQA) form the signal peptide. Residue N45 is glycosylated (N-linked (GlcNAc...) asparagine). The blocks active site cleft of host thrombin in a reverse direction compared to substrates stretch occupies residues 70-73 (DPGR).

Belongs to the anophelin family. In terms of assembly, interacts with human F2 (thrombin); the interaction results in thrombin inhibition.

It is found in the secreted. Salivary protein with anticoagulant activity that inhibits host thrombin (F2). The chain is Salivary thrombin inhibitor anophelin from Anopheles darlingi (Mosquito).